Consider the following 248-residue polypeptide: UPF0736 protein BcerKBAB4_1085 (248 aa).

Belongs to the UPF0736 family.

This Bacillus mycoides (strain KBAB4) (Bacillus weihenstephanensis) protein is UPF0736 protein BcerKBAB4_1085.